We begin with the raw amino-acid sequence, 133 residues long: Small ribosomal subunit protein uS8 (133 aa).

A disordered region spans residues 1–29; sequence MANHDPISDMLTRIRNASEKRHETTRIPA. Positions 16–25 are enriched in basic and acidic residues; the sequence is NASEKRHETT.

Belongs to the universal ribosomal protein uS8 family. Part of the 30S ribosomal subunit. Contacts proteins S5 and S12.

One of the primary rRNA binding proteins, it binds directly to 16S rRNA central domain where it helps coordinate assembly of the platform of the 30S subunit. The chain is Small ribosomal subunit protein uS8 from Prochlorococcus marinus (strain MIT 9211).